The primary structure comprises 307 residues: UDP-3-O-acyl-N-acetylglucosamine deacetylase (307 aa).

Positions 78, 241, and 245 each coordinate Zn(2+). Catalysis depends on His268, which acts as the Proton donor.

The protein belongs to the LpxC family. The cofactor is Zn(2+).

It carries out the reaction a UDP-3-O-[(3R)-3-hydroxyacyl]-N-acetyl-alpha-D-glucosamine + H2O = a UDP-3-O-[(3R)-3-hydroxyacyl]-alpha-D-glucosamine + acetate. It functions in the pathway glycolipid biosynthesis; lipid IV(A) biosynthesis; lipid IV(A) from (3R)-3-hydroxytetradecanoyl-[acyl-carrier-protein] and UDP-N-acetyl-alpha-D-glucosamine: step 2/6. Its function is as follows. Catalyzes the hydrolysis of UDP-3-O-myristoyl-N-acetylglucosamine to form UDP-3-O-myristoylglucosamine and acetate, the committed step in lipid A biosynthesis. The protein is UDP-3-O-acyl-N-acetylglucosamine deacetylase of Paracidovorax citrulli (strain AAC00-1) (Acidovorax citrulli).